A 420-amino-acid chain; its full sequence is Protein ECERIFERUM 26-like (420 aa).

This sequence belongs to the plant acyltransferase family. In terms of tissue distribution, highly expressed in flowers. Expressed in leaves.

Its function is as follows. Involved in biosynthesis of the epicuticular wax. Plays a role in very-long-chain fatty acid (VLCFA) biosynthesis and is required for VLCFA elongation in leaf. Despite its classification as a BAHD acyltransferase based on sequence homology, CER26L does not seem to share the catalytic mechanism of the members of the BAHD family. This chain is Protein ECERIFERUM 26-like (CER26L), found in Arabidopsis thaliana (Mouse-ear cress).